Reading from the N-terminus, the 216-residue chain is MOB kinase activator 3C (216 aa).

Zn(2+)-binding residues include Cys82, Cys87, His164, and His169.

This sequence belongs to the MOB1/phocein family.

Functionally, may regulate the activity of kinases. This is MOB kinase activator 3C (MOB3C) from Bos taurus (Bovine).